The chain runs to 101 residues: Small ribosomal subunit protein uS14 (101 aa).

It belongs to the universal ribosomal protein uS14 family. As to quaternary structure, part of the 30S ribosomal subunit. Contacts proteins S3 and S10.

Binds 16S rRNA, required for the assembly of 30S particles and may also be responsible for determining the conformation of the 16S rRNA at the A site. This chain is Small ribosomal subunit protein uS14, found in Pseudoalteromonas atlantica (strain T6c / ATCC BAA-1087).